The following is a 402-amino-acid chain: Serine/threonine transporter SstT (402 aa).

8 helical membrane-spanning segments follow: residues 17–37, 44–64, 79–99, 138–158, 179–199, 212–232, 295–315, and 336–356; these read IAIGVVIGAILGLLIPKITVI, FVGGLKAIAPLLVSALVANAL, IVLYLFGTFAAALTAVISHYI, ALSQANYIGVLVWAVVFGFAM, IVRWIINLAPFGILGLVFDTI, VLILVLVGTMTFVALVINPII, MAGAAVTINVLTLAAVTTLGI, and ASGIAGGSLLLVPVACSLFGI.

Belongs to the dicarboxylate/amino acid:cation symporter (DAACS) (TC 2.A.23) family.

The protein localises to the cell membrane. The catalysed reaction is L-serine(in) + Na(+)(in) = L-serine(out) + Na(+)(out). The enzyme catalyses L-threonine(in) + Na(+)(in) = L-threonine(out) + Na(+)(out). Involved in the import of serine and threonine into the cell, with the concomitant import of sodium (symport system). This chain is Serine/threonine transporter SstT, found in Streptococcus thermophilus (strain ATCC BAA-491 / LMD-9).